A 134-amino-acid polypeptide reads, in one-letter code: 6,7-dimethyl-8-ribityllumazine synthase (134 aa).

Residues Phe12, 44–46, and 68–70 contribute to the 5-amino-6-(D-ribitylamino)uracil site; these read VFD and SVI. 73-74 contacts (2S)-2-hydroxy-3-oxobutyl phosphate; the sequence is ET. The Proton donor role is filled by His76. Position 101 (Leu101) interacts with 5-amino-6-(D-ribitylamino)uracil. Arg116 serves as a coordination point for (2S)-2-hydroxy-3-oxobutyl phosphate.

Belongs to the DMRL synthase family.

The catalysed reaction is (2S)-2-hydroxy-3-oxobutyl phosphate + 5-amino-6-(D-ribitylamino)uracil = 6,7-dimethyl-8-(1-D-ribityl)lumazine + phosphate + 2 H2O + H(+). Its pathway is cofactor biosynthesis; riboflavin biosynthesis; riboflavin from 2-hydroxy-3-oxobutyl phosphate and 5-amino-6-(D-ribitylamino)uracil: step 1/2. Catalyzes the formation of 6,7-dimethyl-8-ribityllumazine by condensation of 5-amino-6-(D-ribitylamino)uracil with 3,4-dihydroxy-2-butanone 4-phosphate. This is the penultimate step in the biosynthesis of riboflavin. The protein is 6,7-dimethyl-8-ribityllumazine synthase of Methanosarcina mazei (strain ATCC BAA-159 / DSM 3647 / Goe1 / Go1 / JCM 11833 / OCM 88) (Methanosarcina frisia).